Here is a 225-residue protein sequence, read N- to C-terminus: Enolase-phosphatase E1 (225 aa).

Belongs to the HAD-like hydrolase superfamily. MasA/MtnC family. Monomer. Requires Mg(2+) as cofactor.

It catalyses the reaction 5-methylsulfanyl-2,3-dioxopentyl phosphate + H2O = 1,2-dihydroxy-5-(methylsulfanyl)pent-1-en-3-one + phosphate. Its pathway is amino-acid biosynthesis; L-methionine biosynthesis via salvage pathway; L-methionine from S-methyl-5-thio-alpha-D-ribose 1-phosphate: step 3/6. It functions in the pathway amino-acid biosynthesis; L-methionine biosynthesis via salvage pathway; L-methionine from S-methyl-5-thio-alpha-D-ribose 1-phosphate: step 4/6. Bifunctional enzyme that catalyzes the enolization of 2,3-diketo-5-methylthiopentyl-1-phosphate (DK-MTP-1-P) into the intermediate 2-hydroxy-3-keto-5-methylthiopentenyl-1-phosphate (HK-MTPenyl-1-P), which is then dephosphorylated to form the acireductone 1,2-dihydroxy-3-keto-5-methylthiopentene (DHK-MTPene). This chain is Enolase-phosphatase E1, found in Shewanella woodyi (strain ATCC 51908 / MS32).